We begin with the raw amino-acid sequence, 236 residues long: Urease accessory protein UreF (236 aa).

This sequence belongs to the UreF family. As to quaternary structure, ureD, UreF and UreG form a complex that acts as a GTP-hydrolysis-dependent molecular chaperone, activating the urease apoprotein by helping to assemble the nickel containing metallocenter of UreC. The UreE protein probably delivers the nickel.

The protein resides in the cytoplasm. Required for maturation of urease via the functional incorporation of the urease nickel metallocenter. The chain is Urease accessory protein UreF from Granulibacter bethesdensis (strain ATCC BAA-1260 / CGDNIH1).